Consider the following 104-residue polypeptide: MFSTSDQVSKMNSRILSALLILGIATCVIAGGFCPKSRHPQCDLSYKINDCCAQSDCRVGSVCCVEGCGNVCRAESDTPLGEKFVDGSECKHGHVFPKKWYQFW.

Positions 1–30 are cleaved as a signal peptide; that stretch reads MFSTSDQVSKMNSRILSALLILGIATCVIA. The WAP domain maps to 31-76; the sequence is GGFCPKSRHPQCDLSYKINDCCAQSDCRVGSVCCVEGCGNVCRAES. Intrachain disulfides connect Cys34–Cys64, Cys42–Cys68, Cys51–Cys63, Cys52–Cys90, and Cys57–Cys72.

This sequence belongs to the venom protein 11 family. 02 (wap-2) subfamily. In terms of processing, contains 5 disulfide bonds. Expressed by the venom gland.

Its subcellular location is the secreted. Its function is as follows. Has antibacterial activity. In Lycosa singoriensis (Wolf spider), this protein is U20-lycotoxin-Ls1c.